The primary structure comprises 241 residues: B-cell receptor-associated protein 29 (241 aa).

Residues 1 to 6 (MTLQWA) are Lumenal-facing. A helical membrane pass occupies residues 7-27 (AVATFLYAEIGLILIFCLPFI). The Cytoplasmic segment spans residues 28–43 (PPQRWQKIFSFNVWGK). The helical transmembrane segment at 44–64 (IATFWNKAFLTIIILLIVLFL) threads the bilayer. Residues 65 to 103 (DAVREVRKYSSVHTIEKSSTSRPDAYEHTQMKLFRSQRN) lie on the Lumenal side of the membrane. Residues 104 to 124 (LYISGFSLFFWLVLRRLVTLI) form a helical membrane-spanning segment. At 125 to 241 (TQLAKELSNK…RLERGNKKRL (117 aa)) the chain is on the cytoplasmic side. Positions 166–233 (GKDEECVLEA…KEHSELQDRL (68 aa)) form a coiled coil. Residues 198-223 (LSKAQNDVMEMKMQSERLSKEYDQLL) form a disordered region. Over residues 206–223 (MEMKMQSERLSKEYDQLL) the composition is skewed to basic and acidic residues. The short motif at 238–241 (KKRL) is the Di-lysine motif element.

It belongs to the BCAP29/BCAP31 family. As to quaternary structure, homodimer. Heterodimer with BCAP31. Binds CASP8 (isoform 9) as a complex containing BCAP31, BCAP29, BCL2 and/or BCL2L1. Interacts with VAMP3, VAMP1 and membrane IgD immunoglobulins. May interact with ACTG1 and non-muscle myosin II.

Its subcellular location is the endoplasmic reticulum membrane. May play a role in anterograde transport of membrane proteins from the endoplasmic reticulum to the Golgi. May be involved in CASP8-mediated apoptosis. This Homo sapiens (Human) protein is B-cell receptor-associated protein 29 (BCAP29).